An 813-amino-acid polypeptide reads, in one-letter code: Hyaluronate lyase HylB (813 aa).

A signal peptide (tat-type signal) is located at residues methionine 1–alanine 32. Residues asparagine 222, histidine 272, and tyrosine 281 contribute to the active site.

Belongs to the polysaccharide lyase 8 family. Post-translationally, predicted to be exported by the Tat system. The position of the signal peptide cleavage has not been experimentally proven.

Its subcellular location is the secreted. It catalyses the reaction [hyaluronan](n) = n 3-(4-deoxy-beta-D-gluc-4-enuronosyl)-N-acetyl-D-glucosamine + H2O. In terms of biological role, degrades hyaluronic acid (HA) exclusively into HA disaccharides (HA-2). Produced HA-2s confer anti-inflammatory properties leading to reduced immunopathology in the mouse model of acne. This chain is Hyaluronate lyase HylB, found in Cutibacterium acnes (strain DSM 16379 / KPA171202) (Propionibacterium acnes).